The sequence spans 215 residues: Urease accessory protein UreG (215 aa).

GTP is bound at residue 24 to 31; that stretch reads GPVGSGKT.

Belongs to the SIMIBI class G3E GTPase family. UreG subfamily. In terms of assembly, homodimer. UreD, UreF and UreG form a complex that acts as a GTP-hydrolysis-dependent molecular chaperone, activating the urease apoprotein by helping to assemble the nickel containing metallocenter of UreC. The UreE protein probably delivers the nickel.

The protein resides in the cytoplasm. Facilitates the functional incorporation of the urease nickel metallocenter. This process requires GTP hydrolysis, probably effectuated by UreG. This is Urease accessory protein UreG from Burkholderia cenocepacia (strain HI2424).